Consider the following 529-residue polypeptide: Serine hydroxymethyltransferase 3, chloroplastic (529 aa).

Residues 1–60 (MQACCGGNSMASLQQPGRVQGSVFPPIMPPVTKFSQQLKFNISKPFRSSFLKRNLVSEMR) constitute a chloroplast transit peptide. N6-(pyridoxal phosphate)lysine is present on Lys-314.

The protein belongs to the SHMT family. As to quaternary structure, homotetramer. It depends on pyridoxal 5'-phosphate as a cofactor.

It is found in the plastid. It localises to the chloroplast. The catalysed reaction is (6R)-5,10-methylene-5,6,7,8-tetrahydrofolate + glycine + H2O = (6S)-5,6,7,8-tetrahydrofolate + L-serine. The protein operates within one-carbon metabolism; tetrahydrofolate interconversion. Its activity is regulated as follows. Inhibited by 5-CH3-H4PteGlu1/5 and 5-HCO-H4PteGlu1/5 in vitro. Its function is as follows. Catalyzes the interconversion of serine and glycine and directs the hydroxymethyl moiety of serine into the metabolic network of H4PteGlu(n)-bound one-carbon units. The chain is Serine hydroxymethyltransferase 3, chloroplastic from Arabidopsis thaliana (Mouse-ear cress).